A 152-amino-acid polypeptide reads, in one-letter code: uncharacterized protein (152 aa).

Residues 12-34 (ALLYLGGGLLAMIYGLITFFMAF) traverse the membrane as a helical segment.

The protein to B.subtilis YfjD.

The protein localises to the membrane. This is an uncharacterized protein from Bacillus subtilis (strain 168).